The primary structure comprises 328 residues: MSHLALQPGFDFQQAGKEVLEIEREGLAELDQYINQHFTLACEKMFNCTGKVVVMGMGKSGHIGRKMAATFASTGTSSFFVHPGEAAHGDLGMVTPQDVVIAISNSGESSEIAALIPVLKRLHVPLICITGRPESSMARAADVHLCVKVPKEACPLGLAPTSSTTATLVMGDALAVALLKARGFTAEDFALSHPGGALGRKLLLRVSDIMHTGDEIPHVNKHATLRDALLEITRKNLGMTVICDESMKIDGIFTDGDLRRVFDMGGDMRQLGIAEVMTPGGIRVRPGILAVDALNLMQSRHITSVLVADGDQLLGVLHMHDLLRAGVV.

The SIS domain maps to 41–184; it reads ACEKMFNCTG…AVALLKARGF (144 aa). Substrate is bound by residues 75–76, His-82, His-88, 114–123, and 148–150; these read GT, ALIPVLKRLH, and KVP. His-82 serves as a coordination point for Zn(2+). Positions 210–268 constitute a CBS 1 domain; sequence MHTGDEIPHVNKHATLRDALLEITRKNLGMTVICDESMKIDGIFTDGDLRRVFDMGGDM. A substrate-binding site is contributed by Glu-275. In terms of domain architecture, CBS 2 spans 277–328; that stretch reads MTPGGIRVRPGILAVDALNLMQSRHITSVLVADGDQLLGVLHMHDLLRAGVV.

The protein belongs to the SIS family. GutQ/KpsF subfamily. As to quaternary structure, homotetramer.

It catalyses the reaction D-arabinose 5-phosphate = D-ribulose 5-phosphate. It participates in carbohydrate biosynthesis; 3-deoxy-D-manno-octulosonate biosynthesis; 3-deoxy-D-manno-octulosonate from D-ribulose 5-phosphate: step 1/3. The protein operates within bacterial outer membrane biogenesis; lipopolysaccharide biosynthesis. Its function is as follows. Involved in the biosynthesis of 3-deoxy-D-manno-octulosonate (KDO), a unique 8-carbon sugar component of lipopolysaccharides (LPSs). Catalyzes the reversible aldol-ketol isomerization between D-ribulose 5-phosphate (Ru5P) and D-arabinose 5-phosphate (A5P). This is Arabinose 5-phosphate isomerase KdsD (kdsD) from Salmonella typhimurium (strain LT2 / SGSC1412 / ATCC 700720).